A 229-amino-acid chain; its full sequence is DNA mismatch repair protein MutH (229 aa).

Belongs to the MutH family.

It is found in the cytoplasm. Functionally, sequence-specific endonuclease that cleaves unmethylated GATC sequences. It is involved in DNA mismatch repair. The sequence is that of DNA mismatch repair protein MutH from Escherichia coli (strain SMS-3-5 / SECEC).